The chain runs to 157 residues: Small ribosomal subunit protein uS7 (157 aa).

Belongs to the universal ribosomal protein uS7 family. Part of the 30S ribosomal subunit. Contacts proteins S9 and S11.

In terms of biological role, one of the primary rRNA binding proteins, it binds directly to 16S rRNA where it nucleates assembly of the head domain of the 30S subunit. Is located at the subunit interface close to the decoding center, probably blocks exit of the E-site tRNA. This chain is Small ribosomal subunit protein uS7, found in Chlamydia felis (strain Fe/C-56) (Chlamydophila felis).